A 252-amino-acid chain; its full sequence is 5-oxoprolinase subunit A (252 aa).

Belongs to the LamB/PxpA family. Forms a complex composed of PxpA, PxpB and PxpC.

It carries out the reaction 5-oxo-L-proline + ATP + 2 H2O = L-glutamate + ADP + phosphate + H(+). Its function is as follows. Catalyzes the cleavage of 5-oxoproline to form L-glutamate coupled to the hydrolysis of ATP to ADP and inorganic phosphate. The polypeptide is 5-oxoprolinase subunit A (Mycobacterium ulcerans (strain Agy99)).